Here is a 435-residue protein sequence, read N- to C-terminus: N-lysine methyltransferase SMYD2-A (435 aa).

An SET domain is found at 7 to 241; the sequence is EGTERFLSPG…PEEEIFNSYI (235 aa). Position 17–19 (17–19) interacts with S-adenosyl-L-methionine; that stretch reads KGR. Residues cysteine 52, cysteine 55, cysteine 65, cysteine 68, cysteine 74, cysteine 78, histidine 86, and cysteine 90 each contribute to the Zn(2+) site. The segment at 52-90 adopts an MYND-type zinc-finger fold; sequence CECCFTRKEGLSKCGKCKQAYYCNVECQRGDWPMHKLEC. Residues histidine 137, 206-207, and 258-260 each bind S-adenosyl-L-methionine; these read NH and YFF.

Belongs to the class V-like SAM-binding methyltransferase superfamily.

Its subcellular location is the cytoplasm. The protein resides in the cytosol. It is found in the nucleus. The enzyme catalyses L-lysyl(4)-[histone H3] + 3 S-adenosyl-L-methionine = N(6),N(6),N(6)-trimethyl-L-lysyl(4)-[histone H3] + 3 S-adenosyl-L-homocysteine + 3 H(+). It carries out the reaction L-lysyl-[protein] + S-adenosyl-L-methionine = N(6)-methyl-L-lysyl-[protein] + S-adenosyl-L-homocysteine + H(+). Functionally, protein-lysine N-methyltransferase that methylates both histones and non-histone proteins, including p53/TP53 and RB1. Specifically trimethylates histone H3 'Lys-4' (H3K4me3) in vivo. The activity requires interaction with HSP90alpha. Shows even higher methyltransferase activity on p53/TP53. Monomethylates 'Lys-370' of p53/TP53, leading to decreased DNA-binding activity and subsequent transcriptional regulation activity of p53/TP53. Monomethylates RB1 at 'Lys-860'. The sequence is that of N-lysine methyltransferase SMYD2-A (smyd2a) from Danio rerio (Zebrafish).